The chain runs to 852 residues: MLGPAVLGLSLWALLHPGTGAPLCLSQQLRMKGDYVLGGLFPLGEAEEAGLRSRTRPSSPVCTRFSSNGLLWALAMKMAVEEINNKSDLLPGLRLGYDLFDTCSEPVVAMKPSLMFLAKAGSRDIAAYCNYTQYQPRVLAVIGPHSSELAMVTGKFFSFFLMPQVSYGASMELLSARETFPSFFRTVPSDRVQLTAAAELLQEFGWNWVAALGSDDEYGRQGLSIFSALAAARGICIAHEGLVPLPRADDSRLGKVQDVLHQVNQSSVQVVLLFASVHAAHALFNYSISSRLSPKVWVASEAWLTSDLVMGLPGMAQMGTVLGFLQRGAQLHEFPQYVKTHLALATDPAFCSALGEREQGLEEDVVGQRCPQCDCITLQNVSAGLNHHQTFSVYAAVYSVAQALHNTLQCNASGCPAQDPVKPWQLLENMYNLTFHVGGLPLRFDSSGNVDMEYDLKLWVWQGSVPRLHDVGRFNGSLRTERLKIRWHTSDNQKPVSRCSRQCQEGQVRRVKGFHSCCYDCVDCEAGSYRQNPDDIACTFCGQDEWSPERSTRCFRRRSRFLAWGEPAVLLLLLLLSLALGLVLAALGLFVHHRDSPLVQASGGPLACFGLVCLGLVCLSVLLFPGQPSPARCLAQQPLSHLPLTGCLSTLFLQAAEIFVESELPLSWADRLSGCLRGPWAWLVVLLAMLVEVALCTWYLVAFPPEVVTDWHMLPTEALVHCRTRSWVSFGLAHATNATLAFLCFLGTFLVRSQPGCYNRARGLTFAMLAYFITWVSFVPLLANVQVVLRPAVQMGALLLCVLGILAAFHLPRCYLLMRQPGLNTPEFFLGGGPGDAQGQNDGNTGNQGKHE.

Residues 1–20 form the signal peptide; it reads MLGPAVLGLSLWALLHPGTG. The Extracellular segment spans residues 21–570; it reads APLCLSQQLR…FLAWGEPAVL (550 aa). 8 N-linked (GlcNAc...) asparagine glycosylation sites follow: Asn85, Asn130, Asn264, Asn285, Asn380, Asn411, Asn432, and Asn475. The required for brazzein responsiveness stretch occupies residues 536–545; the sequence is IACTFCGQDE. Residues 571 to 591 form a helical membrane-spanning segment; the sequence is LLLLLLSLALGLVLAALGLFV. The Cytoplasmic portion of the chain corresponds to 592-603; that stretch reads HHRDSPLVQASG. Residues 604–624 form a helical membrane-spanning segment; that stretch reads GPLACFGLVCLGLVCLSVLLF. The Extracellular portion of the chain corresponds to 625–639; sequence PGQPSPARCLAQQPL. Residues 640–660 traverse the membrane as a helical segment; it reads SHLPLTGCLSTLFLQAAEIFV. Over 661 to 682 the chain is Cytoplasmic; sequence ESELPLSWADRLSGCLRGPWAW. The chain crosses the membrane as a helical span at residues 683–703; sequence LVVLLAMLVEVALCTWYLVAF. Topologically, residues 704 to 729 are extracellular; that stretch reads PPEVVTDWHMLPTEALVHCRTRSWVS. The helical transmembrane segment at 730–750 threads the bilayer; sequence FGLAHATNATLAFLCFLGTFL. Topologically, residues 751–762 are cytoplasmic; sequence VRSQPGCYNRAR. Residues 763–783 traverse the membrane as a helical segment; the sequence is GLTFAMLAYFITWVSFVPLLA. Residues 784 to 789 are Extracellular-facing; it reads NVQVVL. Residues 790-810 form a helical membrane-spanning segment; that stretch reads RPAVQMGALLLCVLGILAAFH. Residues 811–852 are Cytoplasmic-facing; sequence LPRCYLLMRQPGLNTPEFFLGGGPGDAQGQNDGNTGNQGKHE.

This sequence belongs to the G-protein coupled receptor 3 family. TAS1R subfamily. Forms homodimers or heterodimers with TAS1R1 and TAS1R2.

It is found in the cell membrane. Its function is as follows. Putative taste receptor. TAS1R1/TAS1R3 responds to the umami taste stimulus (the taste of monosodium glutamate). TAS1R2/TAS1R3 recognizes diverse natural and synthetic sweeteners. TAS1R3 is essential for the recognition and response to the disaccharide trehalose. Sequence differences within and between species can significantly influence the selectivity and specificity of taste responses. The protein is Taste receptor type 1 member 3 (TAS1R3) of Homo sapiens (Human).